Reading from the N-terminus, the 75-residue chain is M-myrmeciitoxin-Mp2a (75 aa).

The first 26 residues, 1 to 26, serve as a signal peptide directing secretion; it reads MKLSCLLLTLAIIFVLTIVHAPNVEA. Residues 27 to 48 constitute a propeptide that is removed on maturation; that stretch reads KALADPESDAVGFADAVGEADP. Leucine amide is present on Leu-74.

Belongs to the formicidae venom precursor-01 superfamily. Ant pilosulin family. Heterodimer with M-MIITX-Mp2b (pilosin-3b) (AC P0C023); disulfide-linked. Only heterodimers (and not monomers) have been identified in the venom. Expressed by the venom gland.

The protein localises to the secreted. In terms of biological role, heterodimer protein that may serve both defensive (pain-inducing) and predatory (insecticidal) roles. Has membrane-disrupting activity and shows induction of non-specific calcium influx into cells,. Shows broad-spectrum activity against a diverse range of bacteria, and cell lines, as well as hemolytic activity (EC(50)=2.18 uM). In vivo, shows moderate insecticidal activity against D.melanogaster and potent anthelmintic activity against the veterinary nematode H.contortus. In addition, intraplantar injection into mice induces nocifensive behavior and mechanical allodynia. The polypeptide is M-myrmeciitoxin-Mp2a (Myrmecia pilosula (Jack jumper ant)).